Here is a 372-residue protein sequence, read N- to C-terminus: F-box/kelch-repeat protein At2g44630 (372 aa).

Positions 1–13 are enriched in polar residues; the sequence is MSNADEPPQKTNQ. Residues 1-21 are disordered; sequence MSNADEPPQKTNQPPSSSLTP. Residues 21–67 form the F-box domain; it reads PPSLFSLPVDIVLNILALVPKRYYPILCCVSKSLRSLIRSPEIHKTR. Kelch repeat units follow at residues 136 to 181 and 183 to 228; these read EIYC…LVGG and IYVI…SVSL.

The protein is F-box/kelch-repeat protein At2g44630 of Arabidopsis thaliana (Mouse-ear cress).